Consider the following 676-residue polypeptide: RNA helicase NPH-II (676 aa).

Positions F172 to H347 constitute a Helicase ATP-binding domain. Residue G185–T192 coordinates ATP. Positions D296 to H299 match the DEXH box motif. A Helicase C-terminal domain is found at N366–L542.

The protein belongs to the DEAD box helicase family. DEAH subfamily. Monomer.

The protein resides in the virion. It catalyses the reaction ATP + H2O = ADP + phosphate + H(+). Functionally, NTP-dependent helicase that catalyzes unidirectional unwinding of 3'tailed duplex RNAs and plays an important role during transcription of early mRNAs, presumably by preventing R-loop formation behind the elongating RNA polymerase. Might also play a role in the export of newly synthesized mRNA chains out of the core into the cytoplasm. Required for replication and propagation of viral particles. This is RNA helicase NPH-II (OPG084) from Homo sapiens (Human).